A 211-amino-acid chain; its full sequence is Nucleoside triphosphate pyrophosphatase (211 aa).

Aspartate 78 serves as the catalytic Proton acceptor.

The protein belongs to the Maf family. The cofactor is a divalent metal cation.

The protein localises to the cytoplasm. It carries out the reaction a ribonucleoside 5'-triphosphate + H2O = a ribonucleoside 5'-phosphate + diphosphate + H(+). The catalysed reaction is a 2'-deoxyribonucleoside 5'-triphosphate + H2O = a 2'-deoxyribonucleoside 5'-phosphate + diphosphate + H(+). In terms of biological role, nucleoside triphosphate pyrophosphatase. May have a dual role in cell division arrest and in preventing the incorporation of modified nucleotides into cellular nucleic acids. The polypeptide is Nucleoside triphosphate pyrophosphatase (Mycolicibacterium smegmatis (strain ATCC 700084 / mc(2)155) (Mycobacterium smegmatis)).